A 382-amino-acid chain; its full sequence is Flap endonuclease 1 (382 aa).

An N-domain region spans residues 1–104 (MGILGLSKLI…GELAKRAERR (104 aa)). A Mg(2+)-binding site is contributed by aspartate 34. Residues arginine 47 and arginine 70 each coordinate DNA. Aspartate 86 is a Mg(2+) binding site. Positions 95–118 (GELAKRAERREDAQKALEKATEAG) are disordered. Positions 96-115 (ELAKRAERREDAQKALEKAT) are enriched in basic and acidic residues. The I-domain stretch occupies residues 122–253 (DMDKFNRRLV…KRATELMNSY (132 aa)). Positions 158, 160, 179, and 181 each coordinate Mg(2+). Position 158 (glutamate 158) interacts with DNA. DNA is bound by residues glycine 231 and aspartate 233. Aspartate 233 contributes to the Mg(2+) binding site. An interaction with PCNA region spans residues 336 to 344 (TQGRLDSFF). A disordered region spans residues 353–382 (TTPKRKADDKNNVQQKKSKTAGNTKGKRPK). Residues 364–375 (NVQQKKSKTAGN) are compositionally biased toward polar residues.

The protein belongs to the XPG/RAD2 endonuclease family. FEN1 subfamily. As to quaternary structure, interacts with PCNA. Three molecules of FEN1 bind to one PCNA trimer with each molecule binding to one PCNA monomer. PCNA stimulates the nuclease activity without altering cleavage specificity. Requires Mg(2+) as cofactor. Phosphorylated. Phosphorylation upon DNA damage induces relocalization to the nuclear plasma.

The protein resides in the nucleus. It is found in the nucleolus. Its subcellular location is the nucleoplasm. It localises to the mitochondrion. Functionally, structure-specific nuclease with 5'-flap endonuclease and 5'-3' exonuclease activities involved in DNA replication and repair. During DNA replication, cleaves the 5'-overhanging flap structure that is generated by displacement synthesis when DNA polymerase encounters the 5'-end of a downstream Okazaki fragment. It enters the flap from the 5'-end and then tracks to cleave the flap base, leaving a nick for ligation. Also involved in the long patch base excision repair (LP-BER) pathway, by cleaving within the apurinic/apyrimidinic (AP) site-terminated flap. Acts as a genome stabilization factor that prevents flaps from equilibrating into structures that lead to duplications and deletions. Also possesses 5'-3' exonuclease activity on nicked or gapped double-stranded DNA, and exhibits RNase H activity. Also involved in replication and repair of rDNA and in repairing mitochondrial DNA. The sequence is that of Flap endonuclease 1 from Glossina morsitans morsitans (Savannah tsetse fly).